A 230-amino-acid polypeptide reads, in one-letter code: uncharacterized protein (230 aa).

Residues Ser124 and His158 each act as charge relay system in the active site.

The protein belongs to the peptidase S51 family.

This is an uncharacterized protein from Bacillus subtilis (strain 168).